The following is a 308-amino-acid chain: Quinolinate synthase (308 aa).

The iminosuccinate site is built by His-21 and Ser-38. Cys-83 contacts [4Fe-4S] cluster. Iminosuccinate-binding positions include 109–111 (YIN) and Ser-126. Cys-170 contacts [4Fe-4S] cluster. Iminosuccinate is bound by residues 196-198 (HPE) and Thr-213. [4Fe-4S] cluster is bound at residue Cys-263.

This sequence belongs to the quinolinate synthase family. Type 2 subfamily. [4Fe-4S] cluster is required as a cofactor.

It is found in the cytoplasm. It carries out the reaction iminosuccinate + dihydroxyacetone phosphate = quinolinate + phosphate + 2 H2O + H(+). It participates in cofactor biosynthesis; NAD(+) biosynthesis; quinolinate from iminoaspartate: step 1/1. Its function is as follows. Catalyzes the condensation of iminoaspartate with dihydroxyacetone phosphate to form quinolinate. The polypeptide is Quinolinate synthase (Sulfurisphaera tokodaii (strain DSM 16993 / JCM 10545 / NBRC 100140 / 7) (Sulfolobus tokodaii)).